A 39-amino-acid chain; its full sequence is Omega-theraphotoxin-Asp1a (39 aa).

3 disulfides stabilise this stretch: Cys-4–Cys-25, Cys-8–Cys-31, and Cys-17–Cys-36.

In terms of tissue distribution, expressed by the venom gland.

Its subcellular location is the secreted. In terms of biological role, toxin that inhibits voltage-gated calcium channels in rat cerebellar granule cells (IC(50)&lt;200 nM). Is lethal to cockroaches. This is Omega-theraphotoxin-Asp1a from Aphonopelma sp. (American tarantula).